The sequence spans 341 residues: Terpene synthase 9 (341 aa).

The short motif at 81 to 86 is the DDxx(x)D/E motif element; that stretch reads DDILDS. Positions 222–230 match the NDxxSxxxD/E motif motif; that stretch reads NDMASYCKE.

The protein belongs to the terpene synthase family.

The enzyme catalyses (2E,6E)-farnesyl diphosphate = (1S,2S,4R)-beta-elemene + diphosphate. It carries out the reaction (2E,6E)-farnesyl diphosphate = germacrene D + diphosphate. Its function is as follows. Terpene synthase that converts its substrate farnesyl diphosphate (FPP) into the sesquiterpenes beta-elemene, germacrene D and a yet unidentified sesquiterpene. In Dictyostelium purpureum (Slime mold), this protein is Terpene synthase 9.